We begin with the raw amino-acid sequence, 938 residues long: MSDYKKTLQLPETKFPMKANLTQREPEMLRKWEKDDAYGAMVRASGQQGTYVLHDGPPYANGNIHMGHALNKILKDIIVKSRNLQGFKAEYVPGWDCHGLPIELKVEHELGEKKRTMPAHAVRKRCRQYAEKYLDIQRKEFKRLGVFGAWDKPYVTMHPSYEAATARELGNFAAKGGLVRSKKPIYWCCSCQTALAEAEVEYHDHTSPSVHVRFPLRDPRVAEVLPGVDPAHAYIVIWTTTPWTLPDNMAVAVHPDFDYVVVRHGGDFHIVAEGLLEACLKAFKWDEHEVVARIGGRALEGLKATHPFYDRPSPIVLADYVTLESGTGCVHTAPGHGREDYETGLRYGLDIYSPLTDEGRYLDCVEFFAGMTIFEANPKVIEKLREVGNLLAEGRITHSYPHCWRCKKPVIFRATTQWFIAMERNDLRQKALDAIRDDVRWIPSWGQERIHNMIEFRPDWCISRQRMWGVPIVALLCEDCGEAWNDADWMRDIAERFAKHATGCDYWYETDLSDIVPAGLRCPKCGGDHWKKETDILDVWFDSGTSFAAVVEQREECGFPADLYLEGSDQHRGWFHSSLLASIGTRGVPPYRSVLTHGYVVDGDGRKMSKSVGNVVAPQEIIDKHGAEVLRLWVASVDYREDIRISEEILNRLVDAYRRIRNTCRYLLGNISDLTPETMVPFEAMDPLDRFALDLASRAHERIQDAYTEYEFHKVFHTLHNLCVTDLSAFYLDILKDRLYSSAADSHARRSAQTALYRILMLMVRDMAPVLSFTAEEVFGYVPAALRPDVISVFALPATDAPAFTLDTTSRAAWEKLLAVRSETTKAIEPLRKSGEVGHSLDTHVTLFADPSLKATLEGLGSDLRAMFIVSRLEVMNLADAPADAWTSEELPELRVAVRKAEGEKCERCWIISADLGTDAAHPTLCPRCTAVLTGTGA.

A 'HIGH' region motif is present at residues 58–68 (PYANGNIHMGH). Glu566 contacts L-isoleucyl-5'-AMP. The 'KMSKS' region motif lies at 607–611 (KMSKS). Position 610 (Lys610) interacts with ATP. Residues Cys906, Cys909, Cys926, and Cys929 each contribute to the Zn(2+) site.

It belongs to the class-I aminoacyl-tRNA synthetase family. IleS type 1 subfamily. In terms of assembly, monomer. Requires Zn(2+) as cofactor.

It is found in the cytoplasm. The enzyme catalyses tRNA(Ile) + L-isoleucine + ATP = L-isoleucyl-tRNA(Ile) + AMP + diphosphate. In terms of biological role, catalyzes the attachment of isoleucine to tRNA(Ile). As IleRS can inadvertently accommodate and process structurally similar amino acids such as valine, to avoid such errors it has two additional distinct tRNA(Ile)-dependent editing activities. One activity is designated as 'pretransfer' editing and involves the hydrolysis of activated Val-AMP. The other activity is designated 'posttransfer' editing and involves deacylation of mischarged Val-tRNA(Ile). In Nitratidesulfovibrio vulgaris (strain DP4) (Desulfovibrio vulgaris), this protein is Isoleucine--tRNA ligase.